The following is a 117-amino-acid chain: MAARNIGIQVKAPEVECDDKNCPFHGNLPVRGQSFVGVVVSDKPHKTVIIKREVVKYIKKYERYERRTTKLAAHNPPCIHARVGDIVRVMECRPISKTKAFVVVEKLGRIDEVKGEE.

It belongs to the universal ribosomal protein uS17 family. As to quaternary structure, part of the 30S ribosomal subunit.

One of the primary rRNA binding proteins, it binds specifically to the 5'-end of 16S ribosomal RNA. In Methanocaldococcus jannaschii (strain ATCC 43067 / DSM 2661 / JAL-1 / JCM 10045 / NBRC 100440) (Methanococcus jannaschii), this protein is Small ribosomal subunit protein uS17.